The chain runs to 446 residues: Phosphoglucosamine mutase (446 aa).

S102 acts as the Phosphoserine intermediate in catalysis. Mg(2+) contacts are provided by S102, D241, D243, and D245. At S102 the chain carries Phosphoserine.

The protein belongs to the phosphohexose mutase family. It depends on Mg(2+) as a cofactor. In terms of processing, activated by phosphorylation.

It catalyses the reaction alpha-D-glucosamine 1-phosphate = D-glucosamine 6-phosphate. Functionally, catalyzes the conversion of glucosamine-6-phosphate to glucosamine-1-phosphate. This Xylella fastidiosa (strain M23) protein is Phosphoglucosamine mutase.